Here is a 342-residue protein sequence, read N- to C-terminus: S-adenosylmethionine:tRNA ribosyltransferase-isomerase (342 aa).

This sequence belongs to the QueA family. Monomer.

It localises to the cytoplasm. It carries out the reaction 7-aminomethyl-7-carbaguanosine(34) in tRNA + S-adenosyl-L-methionine = epoxyqueuosine(34) in tRNA + adenine + L-methionine + 2 H(+). It participates in tRNA modification; tRNA-queuosine biosynthesis. Transfers and isomerizes the ribose moiety from AdoMet to the 7-aminomethyl group of 7-deazaguanine (preQ1-tRNA) to give epoxyqueuosine (oQ-tRNA). The protein is S-adenosylmethionine:tRNA ribosyltransferase-isomerase of Bacillus subtilis (strain 168).